Reading from the N-terminus, the 664-residue chain is Macoilin (664 aa).

A run of 4 helical transmembrane segments spans residues T28–L48, A75–I95, V120–F140, and F154–V174. A compositionally biased stretch (basic and acidic residues) spans R253–K265. The disordered stretch occupies residues R253–N274. S305 bears the Phosphoserine mark. The segment covering K320–S348 has biased composition (polar residues). The segment at K320–N375 is disordered. N324 carries an N-linked (GlcNAc...) asparagine glycan. S332 is subject to Phosphoserine. N-linked (GlcNAc...) asparagine glycans are attached at residues N340 and N452. The tract at residues T630 to K664 is disordered. Residues S631 and S634 each carry the phosphoserine modification. N-linked (GlcNAc...) asparagine glycosylation occurs at N655.

Belongs to the macoilin family.

The protein localises to the rough endoplasmic reticulum membrane. Its subcellular location is the nucleus membrane. Functionally, plays a role in the regulation of neuronal activity. This chain is Macoilin (MACO1), found in Canis lupus familiaris (Dog).